Consider the following 355-residue polypeptide: D-alanine--D-alanine ligase (355 aa).

One can recognise an ATP-grasp domain in the interval 143-350 (KQIFSNLSIP…IDQLVAKLID (208 aa)). Residue 178-233 (IEKLNLPVFVKPANSGSSLGISKAKNKSEIIKALQKAWEIDSRIVIEEGLNVRELE) coordinates ATP. Aspartate 303, glutamate 317, and asparagine 319 together coordinate Mg(2+).

Belongs to the D-alanine--D-alanine ligase family. The cofactor is Mg(2+). It depends on Mn(2+) as a cofactor.

Its subcellular location is the cytoplasm. The enzyme catalyses 2 D-alanine + ATP = D-alanyl-D-alanine + ADP + phosphate + H(+). The protein operates within cell wall biogenesis; peptidoglycan biosynthesis. In terms of biological role, cell wall formation. The protein is D-alanine--D-alanine ligase of Prochlorococcus marinus (strain MIT 9515).